The primary structure comprises 503 residues: ATP synthase subunit alpha (503 aa).

169–176 provides a ligand contact to ATP; the sequence is GDRKTGKT.

Belongs to the ATPase alpha/beta chains family. As to quaternary structure, F-type ATPases have 2 components, CF(1) - the catalytic core - and CF(0) - the membrane proton channel. CF(1) has five subunits: alpha(3), beta(3), gamma(1), delta(1), epsilon(1). CF(0) has three main subunits: a(1), b(2) and c(9-12). The alpha and beta chains form an alternating ring which encloses part of the gamma chain. CF(1) is attached to CF(0) by a central stalk formed by the gamma and epsilon chains, while a peripheral stalk is formed by the delta and b chains.

The protein resides in the cell membrane. The enzyme catalyses ATP + H2O + 4 H(+)(in) = ADP + phosphate + 5 H(+)(out). Functionally, produces ATP from ADP in the presence of a proton gradient across the membrane. The alpha chain is a regulatory subunit. The protein is ATP synthase subunit alpha of Lactobacillus delbrueckii subsp. bulgaricus (strain ATCC 11842 / DSM 20081 / BCRC 10696 / JCM 1002 / NBRC 13953 / NCIMB 11778 / NCTC 12712 / WDCM 00102 / Lb 14).